We begin with the raw amino-acid sequence, 504 residues long: Cytochrome P450 2D9 (504 aa).

Serine 249 carries the phosphoserine modification. Heme is bound at residue cysteine 446.

It belongs to the cytochrome P450 family. Requires heme as cofactor.

The protein resides in the endoplasmic reticulum membrane. Its subcellular location is the microsome membrane. The enzyme catalyses an organic molecule + reduced [NADPH--hemoprotein reductase] + O2 = an alcohol + oxidized [NADPH--hemoprotein reductase] + H2O + H(+). Its function is as follows. Cytochromes P450 are a group of heme-thiolate monooxygenases. In liver microsomes, this enzyme is involved in an NADPH-dependent electron transport pathway. It oxidizes a variety of structurally unrelated compounds, including steroids, fatty acids, and xenobiotics. This Mus musculus (Mouse) protein is Cytochrome P450 2D9 (Cyp2d9).